The following is a 208-amino-acid chain: Mediator of RNA polymerase II transcription subunit 18 (208 aa).

S66 bears the Phosphoserine mark.

The protein belongs to the Mediator complex subunit 18 family. In terms of assembly, component of the Mediator complex, which is composed of MED1, MED4, MED6, MED7, MED8, MED9, MED10, MED11, MED12, MED13, MED13L, MED14, MED15, MED16, MED17, MED18, MED19, MED20, MED21, MED22, MED23, MED24, MED25, MED26, MED27, MED29, MED30, MED31, CCNC, CDK8 and CDC2L6/CDK11. The MED12, MED13, CCNC and CDK8 subunits form a distinct module termed the CDK8 module. Mediator containing the CDK8 module is less active than Mediator lacking this module in supporting transcriptional activation. Individual preparations of the Mediator complex lacking one or more distinct subunits have been variously termed ARC, CRSP, DRIP, PC2, SMCC and TRAP.

The protein resides in the nucleus. Its function is as follows. Component of the Mediator complex, a coactivator involved in the regulated transcription of nearly all RNA polymerase II-dependent genes. Mediator functions as a bridge to convey information from gene-specific regulatory proteins to the basal RNA polymerase II transcription machinery. Mediator is recruited to promoters by direct interactions with regulatory proteins and serves as a scaffold for the assembly of a functional preinitiation complex with RNA polymerase II and the general transcription factors. This Mus musculus (Mouse) protein is Mediator of RNA polymerase II transcription subunit 18 (Med18).